The chain runs to 163 residues: Nucleotide-binding protein Clos_1967 (163 aa).

Belongs to the YajQ family.

Its function is as follows. Nucleotide-binding protein. The sequence is that of Nucleotide-binding protein Clos_1967 from Alkaliphilus oremlandii (strain OhILAs) (Clostridium oremlandii (strain OhILAs)).